Here is a 683-residue protein sequence, read N- to C-terminus: MAQEEIQKPTASVPVVKEETPAPVKEVEVPVTTEKAVAAPAPEATEEKVVSEVAVPETEVTAVKEEEVATGKEILQSESFKEEGYLASELQEAEKNALAELKELVREALNKREFTAPPPPPAPVKEEKVEEKKTEETEEKKEEVKTEEKSLEAETKEEEKSAAPATVETKKEEILAAPAPIVAETKKEETPVAPAPVETKPAAPVVAETKKEEILPAAPVTTETKVEEKVVPVETTPAAPVTTETKEEEKAAPVTTETKEEEKAAPGETKKEEKATASTQVKRASKFIKDIFVSVTTSEKKKEEEKPAVVTIEKAFAADQEEETKTVEAVEESIVSITLPETAAYVEPEEVSIWGIPLLEDERSDVILLKFLRARDFKVKEAFTMLKNTVQWRKENKIDDLVSEDLEGSEFEKLVFTHGVDKQGHVVIYSSYGEFQNKEIFSDKEKLSKFLKWRIQFQEKCVRSLDFSPEAKSSFVFVSDFRNAPGLGQRALWQFIKRAVKQFEDNYPEFVAKELFINVPWWYIPYYKTFGSIITSPRTRSKMVLSGPSKSAETIFKYVAPEVVPVKYGGLSKDSPFTVEDGVTEAVVKSTSKYTIDLPATEGSTLSWELRVLGADVSYGAQFEPSNEASYTVIVSKNRKVGLTDEPVITDSFKASEAGKVVITIDNQTFKKKKVLYRSKTQA.

Residues 1-23 (MAQEEIQKPTASVPVVKEETPAP) form a disordered region. A2 is subject to N-acetylalanine. S79 is subject to Phosphoserine. The stretch at 86-163 (LASELQEAEK…ETKEEEKSAA (78 aa)) forms a coiled coil. The segment at 111-279 (KREFTAPPPP…KKEEKATAST (169 aa)) is disordered. Positions 124-161 (VKEEKVEEKKTEETEEKKEEVKTEEKSLEAETKEEEKS) are enriched in basic and acidic residues. The span at 232 to 243 (PVETTPAAPVTT) shows a compositional bias: low complexity. The span at 244–275 (ETKEEEKAAPVTTETKEEEKAAPGETKKEEKA) shows a compositional bias: basic and acidic residues. K394 participates in a covalent cross-link: Glycyl lysine isopeptide (Lys-Gly) (interchain with G-Cter in ubiquitin). Positions 404 to 576 (EDLEGSEFEK…KYGGLSKDSP (173 aa)) constitute a CRAL-TRIO domain. In terms of domain architecture, GOLD spans 580-681 (EDGVTEAVVK…KKKVLYRSKT (102 aa)).

The protein belongs to the patellin family. In terms of assembly, interacts with the deubiquitinating enzyme AMSH3.

Its subcellular location is the membrane. The protein localises to the cytoplasm. Functionally, carrier protein that may be involved in membrane-trafficking events associated with cell plate formation during cytokinesis. Binds to some hydrophobic molecules such as phosphoinositides and promotes their transfer between the different cellular sites. The protein is Patellin-2 (PATL2) of Arabidopsis thaliana (Mouse-ear cress).